Consider the following 495-residue polypeptide: Protein adenylyltransferase Fic (495 aa).

A disordered region spans residues 1–27; the sequence is MGTEAEQPSPPSPPAQQQEQTNPPLWN. A helical membrane pass occupies residues 36 to 55; the sequence is LYRLVLFFIAGSLAAWTIHA. TPR repeat units lie at residues 121–154 and 155–189; these read ALVSLRMAQDMYLAGKDDKASRLFEHALALAPRH and PEVLLRYGEFLEHSQRNIVLADQYYFQALTISPSN. The Inhibitory (S/T)XXXE(G/N) motif signature appears at 246–251; that stretch reads SVGIEG. ATP-binding positions include Glu-250 and 331–334; that span reads VGGH. In terms of domain architecture, Fido spans 300 to 435; that stretch reads ITIKDILELH…IRPFVRFIAD (136 aa). Residue His-378 is part of the active site. Residues 382-389, 414-415, and Asn-422 contribute to the ATP site; these read DGNGRTSR and YY.

This sequence belongs to the fic family. Homodimer.

Its subcellular location is the membrane. It carries out the reaction L-tyrosyl-[protein] + ATP = O-(5'-adenylyl)-L-tyrosyl-[protein] + diphosphate. The enzyme catalyses L-threonyl-[protein] + ATP = 3-O-(5'-adenylyl)-L-threonyl-[protein] + diphosphate. The catalysed reaction is 3-O-(5'-adenylyl)-L-threonyl-[protein] + H2O = L-threonyl-[protein] + AMP + H(+). The side chain of Glu-250 determines which of the two opposing activities (AMPylase or de-AMPylase) will take place. In response to endoplasmic reticulum stress, mediates de-AMPylase activity. Adenylyltransferase activity is inhibited by the inhibitory helix present at the N-terminus: Glu-250 binds ATP and competes with ATP-binding at Arg-389, thereby preventing adenylyltransferase activity. In unstressed cells, disengagement of Glu-250 promotes adenylyltransferase activity. Activation dissociates ATP-binding from Glu-250, allowing ordered binding of the entire ATP moiety with the alpha-phosphate in an orientation that is productive for accepting an incoming target hydroxyl side chain. Functionally, protein that can both mediate the addition of adenosine 5'-monophosphate (AMP) to specific residues of target proteins (AMPylation), and the removal of the same modification from target proteins (de-AMPylation), depending on the context. The side chain of Glu-250 determines which of the two opposing activities (AMPylase or de-AMPylase) will take place. Acts as a key regulator of the unfolded protein response (UPR) by mediating AMPylation or de-AMPylation of Hsc70-3/BiP. In unstressed cells, acts as an adenylyltransferase by mediating AMPylation of Hsc70-3/BiP at 'Thr-518', thereby inactivating it. In response to endoplasmic reticulum stress, acts as a phosphodiesterase by mediating removal of ATP (de-AMPylation) from Hsc70-3/BiP at 'Thr-518', leading to restore HSPA5/BiP activity. This is Protein adenylyltransferase Fic from Drosophila yakuba (Fruit fly).